The following is a 396-amino-acid chain: E3 ubiquitin-protein transferase MAEA (396 aa).

The extracellular and involved in cell to cell contact stretch occupies residues 1 to 124 (MAVQESAVQL…AAASVWKRKR (124 aa)). The residue at position 28 (Thr-28) is a Phosphothreonine. In terms of domain architecture, LisH spans 121–153 (KRKRMDRMMVEHLLRCGYYNTAVKLARQSGIED). In terms of domain architecture, CTLH spans 159 to 216 (MFLTAKEVEESLERRETATCLAWCHDNKSRLRKMKSCLEFSLRIQEFIELIRQNKRLD). The RING-Gid-type zinc-finger motif lies at 314 to 381 (CPVCSRSLNK…QDDKVVCPRT (68 aa)).

Identified in the CTLH complex that contains GID4, RANBP9 and/or RANBP10, MKLN1, MAEA, RMND5A (or alternatively its paralog RMND5B), GID8, ARMC8, WDR26 and YPEL5. Within this complex, MAEA, RMND5A (or alternatively its paralog RMND5B), GID8, WDR26, and RANBP9 and/or RANBP10 form the catalytic core, while GID4, MKLN1, ARMC8 and YPEL5 have ancillary roles. Interacts with F-actin. Post-translationally, autoubiquitinated as component of the CTLH E3 ubiquitin-protein ligase complex (in vitro).

Its subcellular location is the cytoplasm. It is found in the nucleus. The protein resides in the nucleoplasm. It localises to the nucleus matrix. The protein localises to the cell membrane. Its subcellular location is the cytoskeleton. It carries out the reaction S-ubiquitinyl-[E2 ubiquitin-conjugating enzyme]-L-cysteine + [acceptor protein]-L-lysine = [E2 ubiquitin-conjugating enzyme]-L-cysteine + N(6)-ubiquitinyl-[acceptor protein]-L-lysine.. In terms of biological role, core component of the CTLH E3 ubiquitin-protein ligase complex that selectively accepts ubiquitin from UBE2H and mediates ubiquitination and subsequent proteasomal degradation of the transcription factor HBP1. MAEA and RMND5A are both required for catalytic activity of the CTLH E3 ubiquitin-protein ligase complex. MAEA is required for normal cell proliferation. The CTLH E3 ubiquitin-protein ligase complex is not required for the degradation of enzymes involved in gluconeogenesis, such as FBP1. Plays a role in erythroblast enucleation during erythrocyte maturation and in the development of mature macrophages. Mediates the attachment of erythroid cell to mature macrophages; this MAEA-mediated contact inhibits erythroid cell apoptosis. Participates in erythroblastic island formation, which is the functional unit of definitive erythropoiesis. Associates with F-actin to regulate actin distribution in erythroblasts and macrophages. May contribute to nuclear architecture and cells division events. The sequence is that of E3 ubiquitin-protein transferase MAEA (MAEA) from Macaca fascicularis (Crab-eating macaque).